Reading from the N-terminus, the 468-residue chain is UDP-N-acetylmuramate--L-alanine ligase (468 aa).

114–120 (GTHGKTT) lines the ATP pocket.

The protein belongs to the MurCDEF family.

It localises to the cytoplasm. It carries out the reaction UDP-N-acetyl-alpha-D-muramate + L-alanine + ATP = UDP-N-acetyl-alpha-D-muramoyl-L-alanine + ADP + phosphate + H(+). Its pathway is cell wall biogenesis; peptidoglycan biosynthesis. Cell wall formation. The sequence is that of UDP-N-acetylmuramate--L-alanine ligase from Methylobacterium radiotolerans (strain ATCC 27329 / DSM 1819 / JCM 2831 / NBRC 15690 / NCIMB 10815 / 0-1).